A 225-amino-acid chain; its full sequence is Sirohydrochlorin ferrochelatase, chloroplastic (225 aa).

A chloroplast-targeting transit peptide spans 1–46 (MTTQSQFLVNLSYGGLASQSNLRANNRVSPSSCQITRTNRSWALPV). The Fe cation site is built by H89 and H155. C199, C210, C213, and C219 together coordinate [4Fe-4S] cluster.

It belongs to the CbiX family. SirB subfamily. As to quaternary structure, homodimer. [4Fe-4S] cluster serves as cofactor.

It is found in the plastid. The protein resides in the chloroplast. It carries out the reaction siroheme + 2 H(+) = sirohydrochlorin + Fe(2+). It participates in porphyrin-containing compound metabolism; siroheme biosynthesis; siroheme from sirohydrochlorin: step 1/1. In terms of biological role, chelates iron to the siroheme precursor. Catalyzes the last step of the siroheme biosynthesis. Unlike its counterparts in bacteria, contains an [Fe-S] cluster which is not involved directly in the enzymatic reaction, but may play regulatory role in iron, sulfur and tetrapyrrole metabolism. The [Fe-S] cluster is required for normal plant growth. In Arabidopsis thaliana (Mouse-ear cress), this protein is Sirohydrochlorin ferrochelatase, chloroplastic.